The primary structure comprises 298 residues: Urease accessory protein UreD 3 (298 aa).

The interval 1–30 (MADEAGTRSAGGRPIPAAEPLRPALSRQRS) is disordered.

The protein belongs to the UreD family. UreD, UreF and UreG form a complex that acts as a GTP-hydrolysis-dependent molecular chaperone, activating the urease apoprotein by helping to assemble the nickel containing metallocenter of UreC. The UreE protein probably delivers the nickel.

It is found in the cytoplasm. Its function is as follows. Required for maturation of urease via the functional incorporation of the urease nickel metallocenter. This Methylorubrum extorquens (strain PA1) (Methylobacterium extorquens) protein is Urease accessory protein UreD 3.